The sequence spans 241 residues: Chloride intracellular channel protein 1 (241 aa).

Ala2 bears the N-acetylalanine mark. The segment at 2–90 (AEEQPQVELF…EEFLEAVLCP (89 aa)) is required for insertion into the membrane. The residue at position 13 (Lys13) is an N6-acetyllysine. The G-site motif lies at 24 to 27 (CPFS). Cys24 and Cys59 are joined by a disulfide. Residues 26-46 (FSQRLFMVLWLKGVTFNVTTV) form a helical membrane-spanning segment. The GST C-terminal domain maps to 93–233 (YPKLAALNPE…PDDEEIELAY (141 aa)). Lys119 is modified (N6-acetyllysine). Phosphoserine is present on Ser121. At Lys131 the chain carries N6-acetyllysine. The residue at position 156 (Ser156) is a Phosphoserine. Tyr233 is subject to Phosphotyrosine.

The protein belongs to the chloride channel CLIC family. Monomer. Homodimer (in vitro). Interacts with TRAPPC2. Dimerization requires a conformation change that leads to the exposure of a large hydrophobic surface. In vivo, this may lead to membrane insertion.

It is found in the nucleus. The protein resides in the nucleus membrane. Its subcellular location is the cytoplasm. It localises to the cell membrane. The protein localises to the endoplasmic reticulum. It catalyses the reaction L-dehydroascorbate + 2 glutathione = glutathione disulfide + L-ascorbate. The enzyme catalyses chloride(in) = chloride(out). It carries out the reaction iodide(out) = iodide(in). The catalysed reaction is thiocyanate(in) = thiocyanate(out). It catalyses the reaction nitrate(in) = nitrate(out). The enzyme catalyses bromide(in) = bromide(out). It carries out the reaction fluoride(in) = fluoride(out). In the soluble state, catalyzes glutaredoxin-like thiol disulfide exchange reactions with reduced glutathione as electron donor. Reduces selenite and dehydroascorbate and may act as an antioxidant during oxidative stress response. Can insert into membranes and form voltage-dependent multi-ion conductive channels. Membrane insertion seems to be redox-regulated and may occur only under oxidizing conditions. Involved in regulation of the cell cycle. The protein is Chloride intracellular channel protein 1 (CLIC1) of Bos taurus (Bovine).